Here is a 152-residue protein sequence, read N- to C-terminus: Nucleoside diphosphate kinase (152 aa).

ATP contacts are provided by lysine 11, phenylalanine 59, arginine 87, threonine 93, arginine 104, and asparagine 114. The active-site Pros-phosphohistidine intermediate is the histidine 117.

Belongs to the NDK family. Homotetramer. Mg(2+) is required as a cofactor.

It is found in the cytoplasm. The catalysed reaction is a 2'-deoxyribonucleoside 5'-diphosphate + ATP = a 2'-deoxyribonucleoside 5'-triphosphate + ADP. It catalyses the reaction a ribonucleoside 5'-diphosphate + ATP = a ribonucleoside 5'-triphosphate + ADP. In terms of biological role, major role in the synthesis of nucleoside triphosphates other than ATP. The ATP gamma phosphate is transferred to the NDP beta phosphate via a ping-pong mechanism, using a phosphorylated active-site intermediate. The protein is Nucleoside diphosphate kinase of Prochlorococcus marinus subsp. pastoris (strain CCMP1986 / NIES-2087 / MED4).